The chain runs to 123 residues: Small ribosomal subunit protein uS12c (123 aa).

The protein belongs to the universal ribosomal protein uS12 family. In terms of assembly, part of the 30S ribosomal subunit.

The protein resides in the plastid. Its subcellular location is the chloroplast. With S4 and S5 plays an important role in translational accuracy. Located at the interface of the 30S and 50S subunits. This Physcomitrium patens (Spreading-leaved earth moss) protein is Small ribosomal subunit protein uS12c (rps12).